The sequence spans 647 residues: Meiotically up-regulated protein C8C9.04 (647 aa).

Disordered regions lie at residues 1–241 (MTTN…ELKP) and 387–647 (RAQQ…KLFH). Positions 29–46 (KSTNAVEQNNNSSQASVT) are enriched in polar residues. Basic residues predominate over residues 49 to 67 (NKKKAAKRAKKKAAKKKKQ). A compositionally biased stretch (polar residues) spans 92 to 103 (TILQEPGFTQTI). Residues 134 to 145 (PSASTSTAVPTT) are compositionally biased toward low complexity. Residues 146–155 (EARNTSITEP) show a composition bias toward polar residues. Over residues 156 to 177 (ANSPSSSSSSASTKSTATTQSA) the composition is skewed to low complexity. 2 positions are modified to phosphoserine: Ser162 and Ser165. Thr168 is subject to Phosphothreonine. Positions 193–215 (QLGNSPASITSKPATTSAAQPSS) are enriched in polar residues. Residues Ser197 and Ser200 each carry the phosphoserine modification. Basic and acidic residues predominate over residues 232-241 (AEKEIPELKP). Composition is skewed to polar residues over residues 390 to 406 (QPEQ…TETV), 413 to 432 (VSST…TESE), and 488 to 508 (PSST…AQSS). Residue Ser396 is modified to Phosphoserine. Ser489 and Ser490 each carry phosphoserine. The residue at position 491 (Thr491) is a Phosphothreonine. Phosphoserine occurs at positions 515, 519, and 523. Low complexity predominate over residues 518-530 (ASAPSSPGTTSAA). Residues 561 to 589 (GSATTIPSPGSATTKPTPGSATTKPTPVS) show a composition bias toward polar residues. Over residues 596–613 (AGTTKPAPAAGATATAEN) the composition is skewed to low complexity. Basic residues predominate over residues 633–647 (SWFKRMKKSFGKLFH).

Has a role in meiosis and sporulation. This is Meiotically up-regulated protein C8C9.04 from Schizosaccharomyces pombe (strain 972 / ATCC 24843) (Fission yeast).